A 603-amino-acid polypeptide reads, in one-letter code: UvrABC system protein C (603 aa).

Residues 17 to 94 (TTSGCYKMLN…IKTHKPDYNV (78 aa)) enclose the GIY-YIG domain. The region spanning 199–234 (SEILSQIDIKLKLAVQKEDFETAIKLKEMKSSLIEI) is the UVR domain.

The protein belongs to the UvrC family. In terms of assembly, interacts with UvrB in an incision complex.

The protein localises to the cytoplasm. The UvrABC repair system catalyzes the recognition and processing of DNA lesions. UvrC both incises the 5' and 3' sides of the lesion. The N-terminal half is responsible for the 3' incision and the C-terminal half is responsible for the 5' incision. This Borrelia garinii subsp. bavariensis (strain ATCC BAA-2496 / DSM 23469 / PBi) (Borreliella bavariensis) protein is UvrABC system protein C.